The sequence spans 117 residues: Large ribosomal subunit protein bL20 (117 aa).

This sequence belongs to the bacterial ribosomal protein bL20 family.

In terms of biological role, binds directly to 23S ribosomal RNA and is necessary for the in vitro assembly process of the 50S ribosomal subunit. It is not involved in the protein synthesizing functions of that subunit. In Mesomycoplasma hyopneumoniae (strain 7448) (Mycoplasma hyopneumoniae), this protein is Large ribosomal subunit protein bL20.